Consider the following 312-residue polypeptide: Glyoxylate/hydroxypyruvate reductase A (312 aa).

The active site involves Arg-227. His-275 (proton donor) is an active-site residue.

The protein belongs to the D-isomer specific 2-hydroxyacid dehydrogenase family. GhrA subfamily.

It localises to the cytoplasm. It carries out the reaction glycolate + NADP(+) = glyoxylate + NADPH + H(+). The catalysed reaction is (R)-glycerate + NAD(+) = 3-hydroxypyruvate + NADH + H(+). The enzyme catalyses (R)-glycerate + NADP(+) = 3-hydroxypyruvate + NADPH + H(+). In terms of biological role, catalyzes the NADPH-dependent reduction of glyoxylate and hydroxypyruvate into glycolate and glycerate, respectively. The sequence is that of Glyoxylate/hydroxypyruvate reductase A from Escherichia coli O7:K1 (strain IAI39 / ExPEC).